Reading from the N-terminus, the 370-residue chain is MSAALRPVPRPGVLEIEAYVPGKSAAPAGVKLHKLSSNETPLGPSLAAIAAMRETGAHLELYPDGSATDLRRAIAGKYGLDPERIVCGAGSDELLSLLTYAYLGPGDEGVYSQYGFLVYRIAILAAGGTPVVAPERDHTADVDAILKAVTPRTRIVYLANPNNPTGTYLPFDEVRRLHAGLPGNVLLVLDAAYAEYVRRNDYAAGLELVAESENVVMTRTFSKVYGLAALRIGWMVAPAAVVDAVNRIRGPFNLSTAAIAAGTAAIADDAHIAAAVAHNDAWLPKVTRALTDLGLQVTPSVGNFVLIHFPDAPGRSAADADAFLTARGLILRRVGAYGLPNALRMTIGSAEANEAVIAALGDFMREQDDA.

An N6-(pyridoxal phosphate)lysine modification is found at Lys-223.

The protein belongs to the class-II pyridoxal-phosphate-dependent aminotransferase family. Histidinol-phosphate aminotransferase subfamily. As to quaternary structure, homodimer. Pyridoxal 5'-phosphate serves as cofactor.

The enzyme catalyses L-histidinol phosphate + 2-oxoglutarate = 3-(imidazol-4-yl)-2-oxopropyl phosphate + L-glutamate. Its pathway is amino-acid biosynthesis; L-histidine biosynthesis; L-histidine from 5-phospho-alpha-D-ribose 1-diphosphate: step 7/9. The sequence is that of Histidinol-phosphate aminotransferase from Methylobacterium nodulans (strain LMG 21967 / CNCM I-2342 / ORS 2060).